A 208-amino-acid polypeptide reads, in one-letter code: Cytochrome c biogenesis ATP-binding export protein CcmA (208 aa).

The region spanning leucine 3 to lysine 206 is the ABC transporter domain. ATP is bound at residue glycine 35–serine 42.

Belongs to the ABC transporter superfamily. CcmA exporter (TC 3.A.1.107) family. As to quaternary structure, the complex is composed of two ATP-binding proteins (CcmA) and two transmembrane proteins (CcmB).

It is found in the cell inner membrane. It carries out the reaction heme b(in) + ATP + H2O = heme b(out) + ADP + phosphate + H(+). Part of the ABC transporter complex CcmAB involved in the biogenesis of c-type cytochromes; once thought to export heme, this seems not to be the case, but its exact role is uncertain. Responsible for energy coupling to the transport system. The chain is Cytochrome c biogenesis ATP-binding export protein CcmA from Bartonella henselae (strain ATCC 49882 / DSM 28221 / CCUG 30454 / Houston 1) (Rochalimaea henselae).